Reading from the N-terminus, the 127-residue chain is Major sperm protein 38 (127 aa).

Alanine 2 is subject to N-acetylalanine. The MSP domain occupies 9–126; the sequence is DIQTQPGTKI…RRKNLPIEYN (118 aa).

As to expression, sperm.

Its subcellular location is the cell projection. The protein localises to the pseudopodium. It is found in the cytoplasm. It localises to the cytoskeleton. Central component in molecular interactions underlying sperm crawling. Forms an extensive filament system that extends from sperm villipoda, along the leading edge of the pseudopod. The polypeptide is Major sperm protein 38 (msp-38) (Caenorhabditis elegans).